The sequence spans 574 residues: Secreted lipase 1 (574 aa).

Residues 1-17 form the signal peptide; the sequence is MKLSLVPIFALLSTAFA. C95 and C132 are oxidised to a cystine. S244 functions as the Acyl-ester intermediate in the catalytic mechanism. A disulfide bridge connects residues C303 and C312. N323 is a glycosylation site (N-linked (GlcNAc...) asparagine). Catalysis depends on E376, which acts as the Charge relay system. N386 carries an N-linked (GlcNAc...) asparagine glycan. The active-site Charge relay system is H489. N524 carries an N-linked (GlcNAc...) asparagine glycan.

The protein belongs to the type-B carboxylesterase/lipase family.

The protein resides in the secreted. It carries out the reaction a carboxylic ester + H2O = an alcohol + a carboxylate + H(+). Secreted lipase that allows the use of hydrolyzed lipids as carbon sources. Has highest activity with methyl umbelliferyl oleate (C18:1), whereas much lower activities are obtained with the respective esters of palmitate (C16:0) and stearate (C18:0) (24% and 12% of the activity obtained with umbelliferyl oleate, respectively). Hydrolyzes 1- and 3-positioned ester bonds in preference to 2-positioned ester bonds. The production rate of monoglycerides is lower than that of diacylglycerides. Seems not required for the penetration of intact host tissue. The sequence is that of Secreted lipase 1 from Botryotinia fuckeliana (strain B05.10) (Noble rot fungus).